A 420-amino-acid polypeptide reads, in one-letter code: Glycogen synthase kinase-3 beta (420 aa).

Over residues 1-24 (MSGRPRTTSFAESCKPVQQPSSFG) the composition is skewed to polar residues. Positions 1-50 (MSGRPRTTSFAESCKPVQQPSSFGSMKVSRDKDGSKVTTVVATPGQGPDR) are disordered. The region spanning 56 to 340 (YTDTKVIGNG…PLDACAHSFF (285 aa)) is the Protein kinase domain. Residues 62 to 70 (IGNGSFGVV) and lysine 85 contribute to the ATP site. Aspartate 181 serves as the catalytic Proton acceptor. The interval 384–420 (NQAAVSTTSNTTSTSDSNTGERGSTNNAASASASNSS) is disordered. Low complexity-rich tracts occupy residues 389–401 (STTSNTTSTSDSN) and 409–420 (NNAASASASNSS).

Belongs to the protein kinase superfamily. CMGC Ser/Thr protein kinase family. GSK-3 subfamily. Post-translationally, phosphorylated. Activated by phosphorylation at Tyr-216.

The protein resides in the cytoplasm. It localises to the nucleus. Its subcellular location is the cell membrane. The catalysed reaction is L-seryl-[tau protein] + ATP = O-phospho-L-seryl-[tau protein] + ADP + H(+). It carries out the reaction L-threonyl-[tau protein] + ATP = O-phospho-L-threonyl-[tau protein] + ADP + H(+). Functionally, plays a role in the organization of the formation of the main body axis of developing embryo. Acts as an inhibitor of differentiation of primary neurons. Inhibits the ability of ectopically expressed NEUROD1 and other bHLH factors to promote early retinal cell differentiation. May participate in the Wnt signaling pathway. May regulate the circadian clock via phosphorylation of the major clock components. This is Glycogen synthase kinase-3 beta (gsk3b) from Xenopus laevis (African clawed frog).